The following is a 188-amino-acid chain: UPF0397 protein LCK_00164 (188 aa).

5 consecutive transmembrane segments (helical) span residues Val15–Pro35, Gly48–Ile68, Gly79–Gly99, Trp121–Ile141, and Ala154–Ala174.

Belongs to the UPF0397 family.

The protein resides in the cell membrane. The protein is UPF0397 protein LCK_00164 of Leuconostoc citreum (strain KM20).